A 135-amino-acid polypeptide reads, in one-letter code: ATP synthase epsilon chain (135 aa).

The protein belongs to the ATPase epsilon chain family. In terms of assembly, F-type ATPases have 2 components, CF(1) - the catalytic core - and CF(0) - the membrane proton channel. CF(1) has five subunits: alpha(3), beta(3), gamma(1), delta(1), epsilon(1). CF(0) has three main subunits: a, b and c.

The protein localises to the cell inner membrane. Produces ATP from ADP in the presence of a proton gradient across the membrane. This is ATP synthase epsilon chain from Allorhizobium ampelinum (strain ATCC BAA-846 / DSM 112012 / S4) (Agrobacterium vitis (strain S4)).